We begin with the raw amino-acid sequence, 241 residues long: GDSL esterase/lipase At5g45920 (241 aa).

Ser-12 functions as the Nucleophile in the catalytic mechanism. Catalysis depends on residues Asp-189 and His-192.

Belongs to the 'GDSL' lipolytic enzyme family.

This Arabidopsis thaliana (Mouse-ear cress) protein is GDSL esterase/lipase At5g45920.